Here is a 79-residue protein sequence, read N- to C-terminus: Small ribosomal subunit protein uS17 (79 aa).

Belongs to the universal ribosomal protein uS17 family. As to quaternary structure, part of the 30S ribosomal subunit.

In terms of biological role, one of the primary rRNA binding proteins, it binds specifically to the 5'-end of 16S ribosomal RNA. In Rhizobium etli (strain CIAT 652), this protein is Small ribosomal subunit protein uS17.